A 149-amino-acid polypeptide reads, in one-letter code: D-aminoacyl-tRNA deacylase (149 aa).

The Gly-cisPro motif, important for rejection of L-amino acids motif lies at 137-138 (GP).

This sequence belongs to the DTD family. Homodimer.

The protein resides in the cytoplasm. It catalyses the reaction glycyl-tRNA(Ala) + H2O = tRNA(Ala) + glycine + H(+). The enzyme catalyses a D-aminoacyl-tRNA + H2O = a tRNA + a D-alpha-amino acid + H(+). In terms of biological role, an aminoacyl-tRNA editing enzyme that deacylates mischarged D-aminoacyl-tRNAs. Also deacylates mischarged glycyl-tRNA(Ala), protecting cells against glycine mischarging by AlaRS. Acts via tRNA-based rather than protein-based catalysis; rejects L-amino acids rather than detecting D-amino acids in the active site. By recycling D-aminoacyl-tRNA to D-amino acids and free tRNA molecules, this enzyme counteracts the toxicity associated with the formation of D-aminoacyl-tRNA entities in vivo and helps enforce protein L-homochirality. In Janthinobacterium sp. (strain Marseille) (Minibacterium massiliensis), this protein is D-aminoacyl-tRNA deacylase.